Here is a 37-residue protein sequence, read N- to C-terminus: Large ribosomal subunit protein bL36c (37 aa).

Belongs to the bacterial ribosomal protein bL36 family.

The protein resides in the plastid. It localises to the chloroplast. The polypeptide is Large ribosomal subunit protein bL36c (rpl36) (Marchantia polymorpha (Common liverwort)).